Reading from the N-terminus, the 199-residue chain is Peptidyl-tRNA hydrolase (199 aa).

A tRNA-binding site is contributed by Y18. The active-site Proton acceptor is H23. 3 residues coordinate tRNA: Y72, N74, and N120.

It belongs to the PTH family. Monomer.

It is found in the cytoplasm. It catalyses the reaction an N-acyl-L-alpha-aminoacyl-tRNA + H2O = an N-acyl-L-amino acid + a tRNA + H(+). Functionally, hydrolyzes ribosome-free peptidyl-tRNAs (with 1 or more amino acids incorporated), which drop off the ribosome during protein synthesis, or as a result of ribosome stalling. Catalyzes the release of premature peptidyl moieties from peptidyl-tRNA molecules trapped in stalled 50S ribosomal subunits, and thus maintains levels of free tRNAs and 50S ribosomes. This chain is Peptidyl-tRNA hydrolase, found in Bifidobacterium animalis subsp. lactis (strain AD011).